Consider the following 178-residue polypeptide: Ribosomal RNA small subunit methyltransferase G (178 aa).

Residues glycine 54, leucine 59, 105-106 (LE), and arginine 120 contribute to the S-adenosyl-L-methionine site.

This sequence belongs to the methyltransferase superfamily. RNA methyltransferase RsmG family.

It is found in the cytoplasm. It catalyses the reaction guanosine(527) in 16S rRNA + S-adenosyl-L-methionine = N(7)-methylguanosine(527) in 16S rRNA + S-adenosyl-L-homocysteine. In terms of biological role, specifically methylates the N7 position of guanine in position 527 of 16S rRNA. The sequence is that of Ribosomal RNA small subunit methyltransferase G from Helicobacter acinonychis (strain Sheeba).